Here is a 367-residue protein sequence, read N- to C-terminus: 15-cis-zeta-carotene isomerase, chloroplastic (367 aa).

The N-terminal 58 residues, 1–58 (MAVYHLLLSSPPSLLLLPPSPRRPNLTLIRRIPAHPRLGNSTSLLSSSSPVIRKILVR), are a transit peptide targeting the chloroplast. 6 helical membrane passes run 95–115 (SWVY…VVWI), 137–157 (EVAM…LASL), 172–192 (VLFA…FINH), 211–231 (AIWV…FNLL), 269–289 (LWIG…HHLF), and 339–359 (LPYL…PLMQ).

As to expression, expressed in leaves and at lower levels in roots.

The protein localises to the plastid. The protein resides in the chloroplast membrane. The catalysed reaction is 9,9',15-tri-cis-zeta-carotene = 9,9'-di-cis-zeta-carotene. Functionally, isomerase involved in the biosynthesis of carotenoids. Catalyzes the cis- to trans-conversion of the 15-cis-bond in 9,15,9'-tri-cis-zeta-carotene. This is 15-cis-zeta-carotene isomerase, chloroplastic (Z-ISO) from Arabidopsis thaliana (Mouse-ear cress).